The sequence spans 516 residues: Potassium voltage-gated channel subfamily A member 10 (516 aa).

Residues 223–244 (VALVSVLVIVISIIIFCMETLP) form a helical membrane-spanning segment. N-linked (GlcNAc...) asparagine glycosylation occurs at N261. The chain crosses the membrane as a helical span at residues 276 to 296 (FFVIETACIIWFSFELFVRFI). The chain crosses the membrane as a helical span at residues 308–328 (IMNIIDIVSIIPYFVTLTTEL). N339 is a glycosylation site (N-linked (GlcNAc...) asparagine). A helical; Voltage-sensor transmembrane segment spans residues 344–363 (ILRIIRLVRVFRIFKLSRHS). Residues 380-400 (LGLLIFFLFIGVILFSSAVYF) form a helical membrane-spanning segment. A Selectivity filter motif is present at residues 426 to 431 (TVGYGD). A helical membrane pass occupies residues 441–461 (IVGTLCAIAGVLTIALPVPVI). The N-linked (GlcNAc...) asparagine glycan is linked to N503.

It belongs to the potassium channel family. A (Shaker) (TC 1.A.1.2) subfamily. Kv1.8/KCNA10 sub-subfamily. As to quaternary structure, homotetramer. Detected in brain, cochlear sensory epithelium, cochlear ganglion, tegumentum vasculosum. Detected at low levels in cochlear lagena.

It localises to the membrane. The catalysed reaction is K(+)(in) = K(+)(out). The channel activity is up-regulated by cAMP. In terms of biological role, voltage-gated potassium ion channel that mediates K(+) permeability of excitable membranes. When opened in response to the voltage difference across the membrane, KCNA10 channel selectively allows the flow of potassium ions across the membrane down their electrochemical gradient. This is Potassium voltage-gated channel subfamily A member 10 (KCNA10) from Gallus gallus (Chicken).